The sequence spans 338 residues: MIESDRLVSGKARSEEQVIERAVRPKRLTDYVGQESLKAQLSIFIEAALKRQEALDHVLLFGPPGLGKTTLAAIIAFELGVGLRQTSGPILDKAGDLAALLTNLEPHDVLFIDEIHRLSPAVEEVLYPAMEDYQIDIMIGEGPAARSIKLDLPPFTLIGATTRSGLLTAPLRDRFGISHHLQYYHHDELTQIVMRSAKLFEVAIDKEGAEEIGRRSRGTPRIANRLLRRVRDYAQVRGDGMITKALADEALELLAVDHLGFDALDRRMLLCLVEYFGGGPTGIDTLAVSVGEERGTLEDVVEPYLIQQGFIQRTPRGRVATELAYQYLNIEVPDGRNS.

The interval Ser4 to Tyr184 is large ATPase domain (RuvB-L). ATP-binding positions include Arg24, Gly65, Lys68, Thr69, Thr70, Glu131 to Tyr133, Arg174, Tyr184, and Arg221. Thr69 contributes to the Mg(2+) binding site. The segment at His185–Ala255 is small ATPAse domain (RuvB-S). Residues His258–Ser338 are head domain (RuvB-H). 3 residues coordinate DNA: Arg294, Arg313, and Arg318.

Belongs to the RuvB family. Homohexamer. Forms an RuvA(8)-RuvB(12)-Holliday junction (HJ) complex. HJ DNA is sandwiched between 2 RuvA tetramers; dsDNA enters through RuvA and exits via RuvB. An RuvB hexamer assembles on each DNA strand where it exits the tetramer. Each RuvB hexamer is contacted by two RuvA subunits (via domain III) on 2 adjacent RuvB subunits; this complex drives branch migration. In the full resolvosome a probable DNA-RuvA(4)-RuvB(12)-RuvC(2) complex forms which resolves the HJ.

The protein localises to the cytoplasm. The enzyme catalyses ATP + H2O = ADP + phosphate + H(+). Functionally, the RuvA-RuvB-RuvC complex processes Holliday junction (HJ) DNA during genetic recombination and DNA repair, while the RuvA-RuvB complex plays an important role in the rescue of blocked DNA replication forks via replication fork reversal (RFR). RuvA specifically binds to HJ cruciform DNA, conferring on it an open structure. The RuvB hexamer acts as an ATP-dependent pump, pulling dsDNA into and through the RuvAB complex. RuvB forms 2 homohexamers on either side of HJ DNA bound by 1 or 2 RuvA tetramers; 4 subunits per hexamer contact DNA at a time. Coordinated motions by a converter formed by DNA-disengaged RuvB subunits stimulates ATP hydrolysis and nucleotide exchange. Immobilization of the converter enables RuvB to convert the ATP-contained energy into a lever motion, pulling 2 nucleotides of DNA out of the RuvA tetramer per ATP hydrolyzed, thus driving DNA branch migration. The RuvB motors rotate together with the DNA substrate, which together with the progressing nucleotide cycle form the mechanistic basis for DNA recombination by continuous HJ branch migration. Branch migration allows RuvC to scan DNA until it finds its consensus sequence, where it cleaves and resolves cruciform DNA. The protein is Holliday junction branch migration complex subunit RuvB of Dichelobacter nodosus (strain VCS1703A).